Reading from the N-terminus, the 357-residue chain is UDP-N-acetylglucosamine--N-acetylmuramyl-(pentapeptide) pyrophosphoryl-undecaprenol N-acetylglucosamine transferase (357 aa).

UDP-N-acetyl-alpha-D-glucosamine contacts are provided by residues 15-17 (TGG), Asn-124, Arg-165, Ser-194, and Gln-288.

This sequence belongs to the glycosyltransferase 28 family. MurG subfamily.

Its subcellular location is the cell inner membrane. The catalysed reaction is di-trans,octa-cis-undecaprenyl diphospho-N-acetyl-alpha-D-muramoyl-L-alanyl-D-glutamyl-meso-2,6-diaminopimeloyl-D-alanyl-D-alanine + UDP-N-acetyl-alpha-D-glucosamine = di-trans,octa-cis-undecaprenyl diphospho-[N-acetyl-alpha-D-glucosaminyl-(1-&gt;4)]-N-acetyl-alpha-D-muramoyl-L-alanyl-D-glutamyl-meso-2,6-diaminopimeloyl-D-alanyl-D-alanine + UDP + H(+). The protein operates within cell wall biogenesis; peptidoglycan biosynthesis. In terms of biological role, cell wall formation. Catalyzes the transfer of a GlcNAc subunit on undecaprenyl-pyrophosphoryl-MurNAc-pentapeptide (lipid intermediate I) to form undecaprenyl-pyrophosphoryl-MurNAc-(pentapeptide)GlcNAc (lipid intermediate II). This is UDP-N-acetylglucosamine--N-acetylmuramyl-(pentapeptide) pyrophosphoryl-undecaprenol N-acetylglucosamine transferase from Trichormus variabilis (strain ATCC 29413 / PCC 7937) (Anabaena variabilis).